A 400-amino-acid polypeptide reads, in one-letter code: CCA-adding enzyme (400 aa).

ATP is bound by residues Gly28 and Arg31. Positions 28 and 31 each coordinate CTP. Mg(2+) contacts are provided by Asp41 and Asp43. ATP is bound by residues Arg112, Asp155, Arg158, Arg161, and Arg164. CTP-binding residues include Arg112, Asp155, Arg158, Arg161, and Arg164.

It belongs to the tRNA nucleotidyltransferase/poly(A) polymerase family. Bacterial CCA-adding enzyme type 3 subfamily. In terms of assembly, homodimer. Requires Mg(2+) as cofactor.

The catalysed reaction is a tRNA precursor + 2 CTP + ATP = a tRNA with a 3' CCA end + 3 diphosphate. It catalyses the reaction a tRNA with a 3' CCA end + 2 CTP + ATP = a tRNA with a 3' CCACCA end + 3 diphosphate. In terms of biological role, catalyzes the addition and repair of the essential 3'-terminal CCA sequence in tRNAs without using a nucleic acid template. Adds these three nucleotides in the order of C, C, and A to the tRNA nucleotide-73, using CTP and ATP as substrates and producing inorganic pyrophosphate. tRNA 3'-terminal CCA addition is required both for tRNA processing and repair. Also involved in tRNA surveillance by mediating tandem CCA addition to generate a CCACCA at the 3' terminus of unstable tRNAs. While stable tRNAs receive only 3'-terminal CCA, unstable tRNAs are marked with CCACCA and rapidly degraded. This chain is CCA-adding enzyme, found in Staphylococcus aureus (strain COL).